Here is a 378-residue protein sequence, read N- to C-terminus: Non-functional pseudokinase ZRK6 (378 aa).

The region spanning D34–I378 is the Protein kinase domain. Residues I40–I48 and K83 contribute to the ATP site.

Belongs to the protein kinase superfamily. Ser/Thr protein kinase family. ZRK subfamily. In terms of assembly, interacts with RPP13L4/ZAR1.

This chain is Non-functional pseudokinase ZRK6, found in Arabidopsis thaliana (Mouse-ear cress).